Consider the following 255-residue polypeptide: Putative glycyl-radical enzyme activating enzyme MJ1632 (255 aa).

In terms of domain architecture, Radical SAM core spans 30-245 (SHISLSDKIT…SNVSCSLDFK (216 aa)). [4Fe-4S] cluster is bound by residues C45, C49, and C52. Residues 51–53 (YCF), G88, and 134–136 (DLK) contribute to the S-adenosyl-L-methionine site.

Belongs to the organic radical-activating enzymes family. It depends on [4Fe-4S] cluster as a cofactor.

It carries out the reaction glycyl-[protein] + reduced [flavodoxin] + S-adenosyl-L-methionine = glycin-2-yl radical-[protein] + semiquinone [flavodoxin] + 5'-deoxyadenosine + L-methionine + H(+). This chain is Putative glycyl-radical enzyme activating enzyme MJ1632, found in Methanocaldococcus jannaschii (strain ATCC 43067 / DSM 2661 / JAL-1 / JCM 10045 / NBRC 100440) (Methanococcus jannaschii).